The chain runs to 187 residues: UPF0232 protein Mb0004 (187 aa).

Basic and acidic residues-rich tracts occupy residues 1–17 and 35–45; these read MTGS…ERLM and AARARGQDAGR. 3 disordered regions span residues 1–23, 35–75, and 168–187; these read MTGS…PGLD, AARA…DPQP, and PSWR…DTYG.

The protein belongs to the UPF0232 family.

The protein is UPF0232 protein Mb0004 of Mycobacterium bovis (strain ATCC BAA-935 / AF2122/97).